The following is a 282-amino-acid chain: MNTPEQSQLGKSSAYIDQYAPSLLFPLPRAPKREEIGVQGSQMPFFGADLWTAFELSWLNLRGKPQVALVHFTIPCETPNLIESKSFKLYLNSFNNTRLADAAEVQARLRTDLAEALWRGSEQKGSIGVKIIGLDRFDQEMVQELDGLLLDRLDVECTQYQPAPELLHANHEEAPVTETLVSHLLKSNCLVTGQPDWGSVQIRYSGAQIDQEGLLQYLVSFRNHNEFHEQCVERIFMDIWTRCRPLKLSVYARYTRRGGLDINPFRTSHPGALPANVRSARQ.

Substrate is bound at residue 82–84 (IES). 84 to 85 (SK) lines the NADPH pocket. Cys189 functions as the Thioimide intermediate in the catalytic mechanism. Catalysis depends on Asp196, which acts as the Proton donor. 228–229 (HE) contacts substrate. An NADPH-binding site is contributed by 257–258 (RG).

This sequence belongs to the GTP cyclohydrolase I family. QueF type 2 subfamily. In terms of assembly, homodimer.

Its subcellular location is the cytoplasm. It catalyses the reaction 7-aminomethyl-7-carbaguanine + 2 NADP(+) = 7-cyano-7-deazaguanine + 2 NADPH + 3 H(+). The protein operates within tRNA modification; tRNA-queuosine biosynthesis. Its function is as follows. Catalyzes the NADPH-dependent reduction of 7-cyano-7-deazaguanine (preQ0) to 7-aminomethyl-7-deazaguanine (preQ1). The protein is NADPH-dependent 7-cyano-7-deazaguanine reductase of Delftia acidovorans (strain DSM 14801 / SPH-1).